A 249-amino-acid polypeptide reads, in one-letter code: Basigin (249 aa).

Residues 1–82 (AAGTIQTSVN…VGRSNIVVEG (82 aa)) form the Ig-like C2-type domain. Over 1–187 (AAGTIQTSVN…MTLRVRSRLA (187 aa)) the chain is Extracellular. Disulfide bonds link cysteine 20-cysteine 66 and cysteine 105-cysteine 165. N-linked (GlcNAc...) asparagine glycans are attached at residues asparagine 23, asparagine 132, and asparagine 166. One can recognise an Ig-like V-type domain in the interval 84–179 (PRIKVGKKSE…TQGSVQEIMT (96 aa)). The chain crosses the membrane as a helical span at residues 188–208 (ALWPFLGIVAEVLVLVTIIFI). Residues 209-249 (YEKRRKPDQTLDEDDPGAAPLKGSGHHMNDKDKNVRQRNAT) are Cytoplasmic-facing. Residues 216 to 249 (DQTLDEDDPGAAPLKGSGHHMNDKDKNVRQRNAT) form a disordered region. Threonine 218 carries the post-translational modification Phosphothreonine. At serine 232 the chain carries Phosphoserine.

As to quaternary structure, homooligomer. Interacts with VEGFA, KDR/VEGFR2, PPIA/CYPA, SLC16A12, SLC16A11, ATP1B2, MAG, L1CAM and AJAP1. Interacts with SLC16A3; interaction mediates SLC16A3 targeting to the plasma membrane. Interacts with SLC16A1; interaction mediates SLC16A1 targeting to the plasma membrane. Interacts with PPIL2; regulates BSG transport to the cell membrane. Interacts with XKR8; promoting its localization at the cell membrane. Interacts with SLC16A6; this interaction mediates targeting to the plasma membrane.

It localises to the cell membrane. The protein localises to the endoplasmic reticulum membrane. It is found in the basolateral cell membrane. Functionally, signaling receptor for cyclophilins, essential for PPIA/CYPA and PPIB/CYPB-dependent signaling related to chemotaxis and adhesion of immune cells. Plays an important role in targeting the monocarboxylate transporters SLC16A1/GLUT1, SLC16A3, SLC16A8, SLC16A11 and SLC16A12 to the plasma membrane. Acts as a coreceptor for vascular endothelial growth factor receptor 2 (KDR/VEGFR2) in endothelial cells enhancing its VEGFA-mediated activation and downstream signaling. Promotes angiogenesis through EPAS1/HIF2A-mediated up-regulation of VEGFA and KDR/VEGFR2 in endothelial cells. The polypeptide is Basigin (BSG) (Cricetulus griseus (Chinese hamster)).